The primary structure comprises 619 residues: Probable Xaa-Pro aminopeptidase P (619 aa).

The Mn(2+) site is built by D416, D427, E525, and E539.

This sequence belongs to the peptidase M24B family. It depends on Mn(2+) as a cofactor.

It catalyses the reaction Release of any N-terminal amino acid, including proline, that is linked to proline, even from a dipeptide or tripeptide.. In terms of biological role, catalyzes the removal of a penultimate prolyl residue from the N-termini of peptides. This Tuber melanosporum (strain Mel28) (Perigord black truffle) protein is Probable Xaa-Pro aminopeptidase P (AMPP).